The chain runs to 73 residues: Small ribosomal subunit protein eS27 (73 aa).

Residues C28, C31, C47, and C50 each contribute to the Zn(2+) site. Residues 28–50 (CPKCGNRQVVFSHSTFRARCLNC) form a C4-type zinc finger.

This sequence belongs to the eukaryotic ribosomal protein eS27 family. As to quaternary structure, part of the 30S ribosomal subunit. It depends on Zn(2+) as a cofactor.

The chain is Small ribosomal subunit protein eS27 from Aeropyrum pernix (strain ATCC 700893 / DSM 11879 / JCM 9820 / NBRC 100138 / K1).